Reading from the N-terminus, the 830-residue chain is Cyclin-dependent kinase inhibitor FAR1 (830 aa).

The disordered stretch occupies residues 1 to 31 (MKTPTRVSFEKKIHTPPSGDRDAERSPPKKF). Residues 8-27 (SFEKKIHTPPSGDRDAERSP) show a composition bias toward basic and acidic residues. Residue serine 87 is modified to Phosphoserine; by CDC28. Phosphoserine is present on residues serine 110 and serine 114. An RING-type zinc finger spans residues 202–252 (CLICEESISSTFTGEKVVESTCSHTSHYNCYLMLFETLYFQGKFPECKICG). Threonine 306 carries the post-translational modification Phosphothreonine.

As to quaternary structure, associates with the CDC28-CLN complex. Thought to be phosphorylated by MAP kinase FUS3. Thought to enhance the binding of FAR1 to G1-specific cyclin-dependent kinase (CDK) complexes.

Inhibitor of the cyclin-dependent kinase CDC28. Necessary for cell cycle arrest. Involved in pheromone response. Contributes to mating efficiency. Required for oriented polarization of yeast cells in response to mating pheromones. The polypeptide is Cyclin-dependent kinase inhibitor FAR1 (FAR1) (Saccharomyces cerevisiae (strain ATCC 204508 / S288c) (Baker's yeast)).